We begin with the raw amino-acid sequence, 99 residues long: Small ribosomal subunit protein bS16 (99 aa).

A disordered region spans residues 80–99 (PPRQQNEAKRETAETAQPEA).

The protein belongs to the bacterial ribosomal protein bS16 family.

The chain is Small ribosomal subunit protein bS16 from Thermomicrobium roseum (strain ATCC 27502 / DSM 5159 / P-2).